Reading from the N-terminus, the 108-residue chain is Nucleoid-associated protein PLES_37951 (108 aa).

Disordered stretches follow at residues 1–25 (MMKG…KMQE) and 87–108 (NQEK…KMPF). Over residues 87 to 98 (NQEKMSGFTSGM) the composition is skewed to polar residues.

The protein belongs to the YbaB/EbfC family. In terms of assembly, homodimer.

It localises to the cytoplasm. The protein localises to the nucleoid. Its function is as follows. Binds to DNA and alters its conformation. May be involved in regulation of gene expression, nucleoid organization and DNA protection. The chain is Nucleoid-associated protein PLES_37951 from Pseudomonas aeruginosa (strain LESB58).